A 344-amino-acid chain; its full sequence is G-protein coupled receptor str-217 (344 aa).

Over 1–10 the chain is Extracellular; the sequence is MLLFQKTLSR. The helical transmembrane segment at 11–31 threads the bilayer; sequence VAAPISVAANLILILLIIFKS. Residues 32–39 are Cytoplasmic-facing; sequence PAQMGNYK. Residues 40–60 form a helical membrane-spanning segment; it reads YLLIGLSIFEMSYAVLDVVSE. The Extracellular segment spans residues 61–88; it reads TTVLSIKKSFVVVVPYKDRSFGQETAMD. Residues 89-109 form a helical membrane-spanning segment; that stretch reads INLIYCGFFGFSMGMFVVIFA. Topologically, residues 110-128 are cytoplasmic; sequence YRSFLTTGNTILRKFEGFK. A helical membrane pass occupies residues 129-149; that stretch reads IISWFAYPLFYAIVWILVAWG. Residues 150-195 are Extracellular-facing; it reads PLASFPEMDIVVRPFLLDELNMTVDEVAYTGRLFYSTIDNSLRYSA. Asn-170 carries an N-linked (GlcNAc...) asparagine glycan. Residues 196–216 form a helical membrane-spanning segment; sequence ILTGVLQWVLTASSLFLVIFF. Topologically, residues 217–256 are cytoplasmic; the sequence is GLRCYFHYGKLVQLTDVQSIRLRQLQNQLFLALVCQATVP. A helical membrane pass occupies residues 257–277; sequence LILMHIPVTILYTCCVLNIVF. At 278 to 279 the chain is on the extracellular side; it reads NP. A helical transmembrane segment spans residues 280 to 300; that stretch reads FSVATTIALFPAIDPLPTIFI. At 301 to 344 the chain is on the cytoplasmic side; the sequence is VKNYRVALFEFVCPSCLCWSETLKHMGSNRITSYRSNTVNALSM.

The protein belongs to the nematode receptor-like protein str family. Expressed in the ADL chemosensory neurons.

The protein localises to the cell membrane. Probable G-protein coupled receptor. This is G-protein coupled receptor str-217 from Caenorhabditis elegans.